The sequence spans 455 residues: Argininosuccinate lyase (455 aa).

Belongs to the lyase 1 family. Argininosuccinate lyase subfamily.

It localises to the cytoplasm. It catalyses the reaction 2-(N(omega)-L-arginino)succinate = fumarate + L-arginine. It functions in the pathway amino-acid biosynthesis; L-arginine biosynthesis; L-arginine from L-ornithine and carbamoyl phosphate: step 3/3. This chain is Argininosuccinate lyase, found in Caulobacter vibrioides (strain ATCC 19089 / CIP 103742 / CB 15) (Caulobacter crescentus).